Consider the following 202-residue polypeptide: Small ribosomal subunit protein uS4 (202 aa).

The region spanning 94 to 157 (SRLDSLVYRA…LEIPLIKNTL (64 aa)) is the S4 RNA-binding domain.

This sequence belongs to the universal ribosomal protein uS4 family. Part of the 30S ribosomal subunit. Contacts protein S5. The interaction surface between S4 and S5 is involved in control of translational fidelity.

One of the primary rRNA binding proteins, it binds directly to 16S rRNA where it nucleates assembly of the body of the 30S subunit. Its function is as follows. With S5 and S12 plays an important role in translational accuracy. The sequence is that of Small ribosomal subunit protein uS4 from Ureaplasma parvum serovar 3 (strain ATCC 27815 / 27 / NCTC 11736).